Consider the following 445-residue polypeptide: tRNA-2-methylthio-N(6)-dimethylallyladenosine synthase (445 aa).

Residues 13 to 129 (KKLFIKTYGC…LPAMARAGRG (117 aa)) enclose the MTTase N-terminal domain. 6 residues coordinate [4Fe-4S] cluster: C22, C58, C92, C163, C167, and C170. The Radical SAM core domain maps to 149-383 (TRRAPAAFLT…LTSQQKAAQE (235 aa)). Positions 383–445 (EGMVGRELGV…PNSLAGVLAA (63 aa)) constitute a TRAM domain.

It belongs to the methylthiotransferase family. MiaB subfamily. In terms of assembly, monomer. It depends on [4Fe-4S] cluster as a cofactor.

It is found in the cytoplasm. The enzyme catalyses N(6)-dimethylallyladenosine(37) in tRNA + (sulfur carrier)-SH + AH2 + 2 S-adenosyl-L-methionine = 2-methylsulfanyl-N(6)-dimethylallyladenosine(37) in tRNA + (sulfur carrier)-H + 5'-deoxyadenosine + L-methionine + A + S-adenosyl-L-homocysteine + 2 H(+). Its function is as follows. Catalyzes the methylthiolation of N6-(dimethylallyl)adenosine (i(6)A), leading to the formation of 2-methylthio-N6-(dimethylallyl)adenosine (ms(2)i(6)A) at position 37 in tRNAs that read codons beginning with uridine. In Paracoccus denitrificans (strain Pd 1222), this protein is tRNA-2-methylthio-N(6)-dimethylallyladenosine synthase.